Here is a 221-residue protein sequence, read N- to C-terminus: Large ribosomal subunit protein uL3 (221 aa).

Belongs to the universal ribosomal protein uL3 family. Part of the 50S ribosomal subunit. Forms a cluster with proteins L14 and L19.

Its function is as follows. One of the primary rRNA binding proteins, it binds directly near the 3'-end of the 23S rRNA, where it nucleates assembly of the 50S subunit. The protein is Large ribosomal subunit protein uL3 of Nocardia farcinica (strain IFM 10152).